The sequence spans 630 residues: Phosphatidylinositol 4-kinase gamma 5 (630 aa).

Positions 41–98 (RRVFVQTETGCVLGLELDRSDNAHTVKRKLQVALNFPIEESSLTFGDLVLKNDLTAVR) constitute a Ubiquitin-like; degenerate domain. The PI3K/PI4K catalytic domain occupies 162–459 (GIDPVAVNSG…LIGEKDAESP (298 aa)). Residues 168-174 (VNSGLGG) form a G-loop region. ATP-binding positions include 169-175 (NSGLGGA), lysine 190, and 279-282 (QQFI). A catalytic loop region spans residues 312–320 (LNTDRHSGN). The interval 339 to 365 (PIDHGLCLPETLEDPYFEWIHWPQASI) is activation loop. Aspartate 341 is a binding site for ATP. The disordered stretch occupies residues 500-527 (LSKVEETTEDGEEEEEEDREEEENDRAD). Residues 506 to 524 (TTEDGEEEEEEDREEEEND) are compositionally biased toward acidic residues. Position 571 is a phosphoserine (serine 571).

This sequence belongs to the PI3/PI4-kinase family. Type II PI4K subfamily. As to quaternary structure, interacts with AHK2.

It carries out the reaction a 1,2-diacyl-sn-glycero-3-phospho-(1D-myo-inositol) + ATP = a 1,2-diacyl-sn-glycero-3-phospho-(1D-myo-inositol 4-phosphate) + ADP + H(+). The phosphorylation of phosphatidylinositol (PI) to PI4P is the first committed step in the generation of phosphatidylinositol 4,5-bisphosphate (PIP2), a precursor of the second messenger inositol 1,4,5-trisphosphate (InsP3). This Arabidopsis thaliana (Mouse-ear cress) protein is Phosphatidylinositol 4-kinase gamma 5 (PI4KG5).